Reading from the N-terminus, the 162-residue chain is Cyclic pyranopterin monophosphate synthase (162 aa).

Substrate contacts are provided by residues 75 to 77 (LCH) and 113 to 114 (ME). The active site involves Asp128.

It belongs to the MoaC family. As to quaternary structure, homohexamer; trimer of dimers.

The enzyme catalyses (8S)-3',8-cyclo-7,8-dihydroguanosine 5'-triphosphate = cyclic pyranopterin phosphate + diphosphate. The protein operates within cofactor biosynthesis; molybdopterin biosynthesis. Functionally, catalyzes the conversion of (8S)-3',8-cyclo-7,8-dihydroguanosine 5'-triphosphate to cyclic pyranopterin monophosphate (cPMP). This chain is Cyclic pyranopterin monophosphate synthase, found in Burkholderia vietnamiensis (strain G4 / LMG 22486) (Burkholderia cepacia (strain R1808)).